Here is an 88-residue protein sequence, read N- to C-terminus: Cell division topological specificity factor (88 aa).

It belongs to the MinE family.

Its function is as follows. Prevents the cell division inhibition by proteins MinC and MinD at internal division sites while permitting inhibition at polar sites. This ensures cell division at the proper site by restricting the formation of a division septum at the midpoint of the long axis of the cell. The chain is Cell division topological specificity factor from Clostridium botulinum (strain Alaska E43 / Type E3).